Reading from the N-terminus, the 269-residue chain is Putative esterase/lipase 1 (269 aa).

Residue histidine 27 is part of the active site. The active-site Charge relay system is the serine 94.

The protein belongs to the lipase/esterase LIP3/BchO family.

The chain is Putative esterase/lipase 1 from Mycoplasma pneumoniae (strain ATCC 29342 / M129 / Subtype 1) (Mycoplasmoides pneumoniae).